The primary structure comprises 949 residues: Coiled-coil domain-containing protein 80 (949 aa).

The N-terminal stretch at 1–27 is a signal peptide; that stretch reads MTWKMGPHFTMLLAMWLVCGSASQSSA. 3 disordered regions span residues 24-79, 289-360, and 408-609; these read QSSA…RRKS, HVVQ…ATRA, and GPSV…SPRK. The segment covering 295-305 has biased composition (gly residues); sequence NNGGGGGGSTG. The segment covering 308–328 has biased composition (basic and acidic residues); that stretch reads SDKRKEDPRRTQIHPTREPPR. Over residues 345 to 360 the composition is skewed to low complexity; sequence RATTLPPAPVTTATRA. A compositionally biased stretch (basic and acidic residues) spans 419–429; that stretch reads PRKEQQREKPQ. The span at 436–453 shows a compositional bias: polar residues; that stretch reads KATNYGSFTATPPTTLWE. The span at 463–477 shows a compositional bias: basic and acidic residues; it reads RFRDNRTDKREHGHQ. A glycan (N-linked (GlcNAc...) asparagine) is linked at N467. Residues 487 to 498 are compositionally biased toward basic residues; sequence KPIKGKLPKKKE. Basic and acidic residues-rich tracts occupy residues 499–511, 534–548, and 556–581; these read KILS…KYDL, KESK…PEKE, and AKPD…EKEK. Residues K544 and K547 each participate in a glycyl lysine isopeptide (Lys-Gly) (interchain with G-Cter in SUMO2) cross-link. Residues 559 to 587 are a coiled coil; it reads DKLLRSEKQMKKAEKKSKQEKEKTKKKKA.

The protein belongs to the CCDC80 family. Binds to various extracellular matrix proteins. Phosphorylated. In terms of tissue distribution, isoform 2 is expressed in uterus, liver, lung, spleen, kidney, heart, bladder, skeletal muscle and brain (at protein level). Isoform 2 is expressed very low in mammary gland and intestine (at protein level). Isoform 2 is expressed in lactating mammary glands and mammary tumors (at protein level). Ubiquitous (isoform 1). Isoform 2 is expressed in ovary, uterus, mammary glands, liver, lung, spleen, kidney, heart, bladder, intestine, skeletal muscle and brain.

It localises to the secreted. It is found in the extracellular space. The protein localises to the extracellular matrix. In terms of biological role, promotes cell adhesion and matrix assembly. The polypeptide is Coiled-coil domain-containing protein 80 (Ccdc80) (Rattus norvegicus (Rat)).